The primary structure comprises 214 residues: rRNA N(6)-adenosine-methyltransferase metl-5 (214 aa).

S-adenosyl-L-methionine is bound by residues glutamine 25, threonine 28, glycine 55, cysteine 58, aspartate 78, and 106–107 (DI).

The protein belongs to the methyltransferase superfamily. PrmA family. As to quaternary structure, heterodimer; heterodimerizes with TRMT112/C04H5.1.

It catalyses the reaction adenosine in rRNA + S-adenosyl-L-methionine = N(6)-methyladenosine in rRNA + S-adenosyl-L-homocysteine + H(+). In terms of biological role, catalytic subunit of a heterodimer with TRMT112/C04H5.1, which specifically methylates the 6th position of adenine in position 1717 of 18S rRNA. This chain is rRNA N(6)-adenosine-methyltransferase metl-5, found in Caenorhabditis elegans.